The sequence spans 1317 residues: DNA-directed RNA polymerase subunit beta' (1317 aa).

Zn(2+) contacts are provided by Cys214, Cys286, Cys293, and Cys296. The tract at residues 1279–1317 (RAYAGTQLSQDDEEFEETYDTDEDDFDMDDDDDFGDDED) is disordered. Acidic residues predominate over residues 1288-1317 (QDDEEFEETYDTDEDDFDMDDDDDFGDDED).

The protein belongs to the RNA polymerase beta' chain family. RpoC2 subfamily. In cyanobacteria the RNAP catalytic core is composed of 2 alpha, 1 beta, 1 beta', 1 gamma and 1 omega subunit. When a sigma factor is associated with the core the holoenzyme is formed, which can initiate transcription. It depends on Zn(2+) as a cofactor.

It catalyses the reaction RNA(n) + a ribonucleoside 5'-triphosphate = RNA(n+1) + diphosphate. Its function is as follows. DNA-dependent RNA polymerase catalyzes the transcription of DNA into RNA using the four ribonucleoside triphosphates as substrates. This is DNA-directed RNA polymerase subunit beta' from Synechocystis sp. (strain ATCC 27184 / PCC 6803 / Kazusa).